The sequence spans 528 residues: NAD(P)H-quinone oxidoreductase chain 4 1 (528 aa).

14 helical membrane-spanning segments follow: residues Phe7–Ile27, Trp32–Phe52, Leu86–Trp106, Leu114–Asp134, Leu136–Trp156, Phe168–Phe188, Ala208–Phe228, Ser242–Ile262, Phe276–Phe296, Ile310–Gly330, Ala331–Ile351, Phe375–Val395, Gly417–Leu437, and Met463–Ala483.

The protein belongs to the complex I subunit 4 family.

Its subcellular location is the cellular thylakoid membrane. The catalysed reaction is a plastoquinone + NADH + (n+1) H(+)(in) = a plastoquinol + NAD(+) + n H(+)(out). It catalyses the reaction a plastoquinone + NADPH + (n+1) H(+)(in) = a plastoquinol + NADP(+) + n H(+)(out). NDH-1 shuttles electrons from NAD(P)H, via FMN and iron-sulfur (Fe-S) centers, to quinones in the respiratory chain. The immediate electron acceptor for the enzyme in this species is believed to be plastoquinone. Couples the redox reaction to proton translocation (for every two electrons transferred, four hydrogen ions are translocated across the cytoplasmic membrane), and thus conserves the redox energy in a proton gradient. The polypeptide is NAD(P)H-quinone oxidoreductase chain 4 1 (Synechococcus sp. (strain JA-2-3B'a(2-13)) (Cyanobacteria bacterium Yellowstone B-Prime)).